Consider the following 92-residue polypeptide: MARSLKKNPFVADNLFKKIDKLNIKAEKEIIITWSRGSTIIPIMVGHTIAIHTGKEHLPIYIMDHMVGHKLGEFASTFNFRGHAKSDNRSRR.

Belongs to the universal ribosomal protein uS19 family.

It localises to the plastid. In terms of biological role, protein S19 forms a complex with S13 that binds strongly to the 16S ribosomal RNA. This is Small ribosomal subunit protein uS19c from Cuscuta exaltata (Tall dodder).